The following is a 98-amino-acid chain: MKQSLILAVLCLALVFATIEAKPKADPNIIVGGCIKCHVKNASGRCVRIVGCGVDKVPDLFSDPNIIVGGCSKCHKQDSSGNCVRIAGCGVDPVRDAE.

A signal peptide spans 1 to 21 (MKQSLILAVLCLALVFATIEA). Residues 22 to 27 (KPKADP) constitute a propeptide that is removed on maturation. Disulfide bonds link Cys34/Cys46 and Cys37/Cys52. 2 propeptides span residues 63–64 (DP) and 92–98 (DPVRDAE).

This sequence belongs to the sea anemone BBH family.

Its subcellular location is the secreted. The protein resides in the nematocyst. Functionally, acts as a positive modulator of mammalian TRPA1, a non-selective cation channel involved in detection of pain, in vitro yet has an analgesic and anti-inflammatory effect in vivo. This is Peptides MS9.1 from Metridium senile (Brown sea anemone).